Reading from the N-terminus, the 734-residue chain is ATP-dependent RNA helicase SUV3L, mitochondrial (734 aa).

A mitochondrion-targeting transit peptide spans 1-60 (MAAAAAIAAALLRRSTSSQHHRRILLLPLLSHLQRAAPRSPSPWDPPPHHRFFFSSDVTA). The tract at residues 58-88 (VTAEGDSKPRPPLDGKQLWREVSTSEPATGA) is disordered. A compositionally biased stretch (basic and acidic residues) spans 62–76 (GDSKPRPPLDGKQLW). One can recognise a Helicase ATP-binding domain in the interval 198 to 356 (FARAMRRRVV…RFKPLVVEAK (159 aa)). 211–218 (GPTNSGKT) provides a ligand contact to ATP. A Helicase C-terminal domain is found at 357 to 525 (TLLGDLKNVR…SFAIQFPDLT (169 aa)). Asn-594 and Asn-614 each carry an N-linked (GlcNAc...) asparagine glycan. The segment at 667-734 (ASWKPTSRQQ…QDPSSLNFVA (68 aa)) is disordered. A compositionally biased stretch (acidic residues) spans 684–693 (EEDNDVEQAS). Residues 695–709 (DNAKNDSEDGYERSI) show a composition bias toward basic and acidic residues. An N-linked (GlcNAc...) asparagine glycan is attached at Asn-699. The span at 725–734 (QDPSSLNFVA) shows a compositional bias: polar residues.

Belongs to the helicase family. Homodimer; in free form. Component of the mitochondrial degradosome (mtEXO) complex which is a heteropentamer containing 2 copies of SUPV3L1 and 3 copies of PNPT1. Mg(2+) serves as cofactor. It depends on Mn(2+) as a cofactor.

The protein resides in the nucleus. The protein localises to the mitochondrion matrix. It is found in the mitochondrion nucleoid. It catalyses the reaction ATP + H2O = ADP + phosphate + H(+). Major helicase player in mitochondrial RNA metabolism. Component of the mitochondrial degradosome (mtEXO) complex, that degrades 3' overhang double-stranded RNA with a 3'-to-5' directionality in an ATP-dependent manner. ATPase and ATP-dependent multisubstrate helicase, able to unwind double-stranded (ds) DNA and RNA, and RNA/DNA heteroduplexes in the 5'-to-3' direction. Plays a role in the RNA surveillance system in mitochondria; regulates the stability of mature mRNAs, the removal of aberrantly formed mRNAs and the rapid degradation of non coding processing intermediates. Confers salinity and drought stress tolerances by maintaining both photosynthesis and antioxidant machinery, probably via an increase in plant hormones levels such as gibberellic acid (GA(3)), the cytokinin zeatin (Z) and indole-3-acetic acid (IAA). This is ATP-dependent RNA helicase SUV3L, mitochondrial from Oryza sativa subsp. japonica (Rice).